We begin with the raw amino-acid sequence, 117 residues long: Large ribosomal subunit protein bL20 (117 aa).

This sequence belongs to the bacterial ribosomal protein bL20 family.

In terms of biological role, binds directly to 23S ribosomal RNA and is necessary for the in vitro assembly process of the 50S ribosomal subunit. It is not involved in the protein synthesizing functions of that subunit. The sequence is that of Large ribosomal subunit protein bL20 from Campylobacter jejuni subsp. jejuni serotype O:2 (strain ATCC 700819 / NCTC 11168).